Here is a 410-residue protein sequence, read N- to C-terminus: MAFLGLFSLLVLQSMATGATFPEEAIADLSVNMYNRLRATGEDENILFSPLSIALAMGMMELGAQGSTQKEIRHSMGYDSLKNGEEFSFLKEFSNMVTAKESQYVMKIANSLFVQNGFHVNEEFLQMMKKYFNAAVNHVDFSQNVAVANYINKWVENNTNNLVKDLVSPRDFDAATYLALINAVYFKGNWKSQFRPENTRTFSFTKDDESEVQIPMMYQQGEFYYGEFSDGSNEAGGIYQVLEIPYEGDEISMMLVLSRQEVPLATLEPLVKAQLVEEWANSVKKQKVEVYLPRFTVEQEIDLKDVLKALGITEIFIKDANLTGLSDNKEIFLSKAIHKSFLEVNEEGSEAAAVSGMIAISRMAVLYPQVIVDHPFFFLIRNRRTGTILFMGRVMHPETMNTSGHDFEEL.

A signal peptide spans 1–16 (MAFLGLFSLLVLQSMA). N-linked (GlcNAc...) asparagine glycans are attached at residues N157, N321, and N401. Residue S403 is glycosylated (O-linked (Xyl...) (chondroitin sulfate) serine).

The protein belongs to the serpin family. In terms of assembly, monomer. Has a tendency to form large polymers already at 41 and 45 degrees Celsius (in vitro). Detected in brain cortex and hippocampus pyramidal neurons (at protein level). Detected in cerebrospinal fluid (at protein level). Predominantly expressed in the brain.

The protein resides in the secreted. It localises to the cytoplasmic vesicle. Its subcellular location is the secretory vesicle lumen. The protein localises to the perikaryon. Its function is as follows. Serine protease inhibitor that inhibits plasminogen activators and plasmin but not thrombin. May be involved in the formation or reorganization of synaptic connections as well as for synaptic plasticity in the adult nervous system. May protect neurons from cell damage by tissue-type plasminogen activator. This chain is Neuroserpin (SERPINI1), found in Homo sapiens (Human).